The chain runs to 681 residues: Chaperone protein HtpG (681 aa).

The segment at 1–326 (MQKGNIGVTT…SPDIPLNVSR (326 aa)) is a; substrate-binding. The tract at residues 327 to 545 (SYLQSDSNVK…YMRRMKEMAN (219 aa)) is b. Positions 546–681 (IQAGMSFYGE…NFVKRSIELI (136 aa)) are c. The segment at 601-620 (DALKKKQEGKKDEDIPTAEK) is disordered.

Belongs to the heat shock protein 90 family. As to quaternary structure, homodimer.

Its subcellular location is the cytoplasm. Functionally, molecular chaperone. Has ATPase activity. This chain is Chaperone protein HtpG, found in Bacteroides fragilis (strain ATCC 25285 / DSM 2151 / CCUG 4856 / JCM 11019 / LMG 10263 / NCTC 9343 / Onslow / VPI 2553 / EN-2).